The sequence spans 265 residues: Undecaprenyl-diphosphatase (265 aa).

Helical transmembrane passes span 1 to 21 (MDFL…FLPI), 39 to 59 (QGVG…ILYF), 87 to 107 (WAVV…LDYI), 110 to 130 (ALRA…LLAA), 144 to 164 (IGFK…IPGT), 187 to 207 (FSFF…LLTI), 217 to 237 (LGFL…IHFF), and 244 to 264 (FGMW…YLLF).

It belongs to the UppP family.

Its subcellular location is the cell inner membrane. The enzyme catalyses di-trans,octa-cis-undecaprenyl diphosphate + H2O = di-trans,octa-cis-undecaprenyl phosphate + phosphate + H(+). Functionally, catalyzes the dephosphorylation of undecaprenyl diphosphate (UPP). Confers resistance to bacitracin. This Idiomarina loihiensis (strain ATCC BAA-735 / DSM 15497 / L2-TR) protein is Undecaprenyl-diphosphatase.